The primary structure comprises 757 residues: Ecdysone receptor (757 aa).

Residues 1–300 (MMKRRWSNNG…GPAPRLQEEL (300 aa)) are modulating. Disordered stretches follow at residues 126–192 (NSVG…GGGG) and 235–289 (LNHH…KKIK). The span at 128–138 (VGGGGGGGGVP) shows a compositional bias: gly residues. Residues 167 to 183 (NSNSNHSNSSSHHTNGH) are compositionally biased toward low complexity. 2 NR C4-type zinc fingers span residues 301–321 (CLVCGDRASGYHYNALTCEGC) and 337–361 (CKFGHACEMDMYMRRKCQECRLKKC). The segment at residues 301–373 (CLVCGDRASG…VGMRPECVVP (73 aa)) is a DNA-binding region (nuclear receptor). An NR LBD domain is found at 442–677 (NQLAVIYKLI…FLEEIWDVHA (236 aa)). Low complexity predominate over residues 717–734 (TSMATSSSSSLSPSAAST). The interval 717–739 (TSMATSSSSSLSPSAASTPNGGA) is disordered.

The protein belongs to the nuclear hormone receptor family. NR1 subfamily.

It is found in the nucleus. Receptor for ecdysone. Binds to ecdysone response elements (ECRES). This is Ecdysone receptor (EcR) from Lucilia cuprina (Green bottle fly).